The primary structure comprises 897 residues: High molecular weight rhoptry protein 3 (897 aa).

The first 24 residues, 1–24, serve as a signal peptide directing secretion; that stretch reads MRSKHLVTLFIITFLSFSTVKVWG. 5 disulfides stabilise this stretch: cysteine 157–cysteine 231, cysteine 244–cysteine 253, cysteine 262–cysteine 276, cysteine 421–cysteine 620, and cysteine 475–cysteine 536. Residues 597-615 traverse the membrane as a helical segment; the sequence is FVLYFISIISVLYINEYYY. Disordered regions lie at residues 788–845 and 859–897; these read KEQS…SNLK and QLDKEKPKKKKSKRKKKRDSSSDRILLEESKTFTSENEL. Residues 792–801 show a composition bias toward polar residues; it reads KSTSAASTSD. Residues 802–817 show a composition bias toward low complexity; sequence ELSGSEGPSTESTSTG. Serine 804 is subject to Phosphoserine. Positions 820–832 are enriched in basic and acidic residues; it reads GEDKTTDNTYKEM. The span at 865–876 shows a compositional bias: basic residues; it reads PKKKKSKRKKKR. Basic and acidic residues predominate over residues 877 to 889; sequence DSSSDRILLEESK.

As to quaternary structure, component of the RhopH complex, composed of CLAG3.1/CLAG3.2, RhopH2 and RhopH3 with a 1:1:1 subunit stoichiometry. Interacts with CLAG3.1/CLAG3.2. Interacts with CDPK1; the interaction promotes RhopH3 phosphorylation in merozoites. Post-translationally, proteolytically cleaved near C-terminus.

Its subcellular location is the host cell membrane. It localises to the parasitophorous vacuole membrane. It is found in the cytoplasmic vesicle. The protein resides in the secretory vesicle. The protein localises to the rhoptry. Its function is as follows. Participates in the formation of new permeability pathways in Plasmodium-infected erythrocytes enabling the uptake of nutrients from the blood plasma. Required for maintaining invasion capacity of merozoites. Required for the trophozoite to schizont developmental transition of the intracellular parasite. The protein is High molecular weight rhoptry protein 3 of Plasmodium falciparum.